Consider the following 1064-residue polypeptide: Carbamoyl phosphate synthase large chain (1064 aa).

A carboxyphosphate synthetic domain region spans residues 1-401; the sequence is MPKRADIKKI…ALMKAIRSLE (401 aa). ATP contacts are provided by R129, R169, G175, G176, K208, I210, E215, G241, I242, H243, Q284, and E298. The ATP-grasp 1 domain occupies 133-327; sequence KQLMEALKEP…IAKMAAKIAI (195 aa). Positions 284, 298, and 300 each coordinate Mg(2+). Residues Q284, E298, and N300 each coordinate Mn(2+). The tract at residues 402–546 is oligomerization domain; that stretch reads IGTFALDDLT…YSTYELENES (145 aa). The tract at residues 547-929 is carbamoyl phosphate synthetic domain; it reads LKEKRPSVLV…ALYKAFVAAG (383 aa). An ATP-grasp 2 domain is found at 671-861; that stretch reads NQVIKKLDLS…LAQLATRVML (191 aa). Residues R707, S746, L748, E752, G777, V778, H779, S780, Q820, and E832 each coordinate ATP. Mg(2+)-binding residues include Q820, E832, and N834. The Mn(2+) site is built by Q820, E832, and N834. Positions 930–1064 constitute an MGS-like domain; the sequence is FKVHEHGNVL…VSAINKGDKS (135 aa). The tract at residues 930–1064 is allosteric domain; the sequence is FKVHEHGNVL…VSAINKGDKS (135 aa).

This sequence belongs to the CarB family. In terms of assembly, composed of two chains; the small (or glutamine) chain promotes the hydrolysis of glutamine to ammonia, which is used by the large (or ammonia) chain to synthesize carbamoyl phosphate. Tetramer of heterodimers (alpha,beta)4. The cofactor is Mg(2+). Mn(2+) is required as a cofactor.

It carries out the reaction hydrogencarbonate + L-glutamine + 2 ATP + H2O = carbamoyl phosphate + L-glutamate + 2 ADP + phosphate + 2 H(+). The catalysed reaction is hydrogencarbonate + NH4(+) + 2 ATP = carbamoyl phosphate + 2 ADP + phosphate + 2 H(+). It participates in amino-acid biosynthesis; L-arginine biosynthesis; carbamoyl phosphate from bicarbonate: step 1/1. Its pathway is pyrimidine metabolism; UMP biosynthesis via de novo pathway; (S)-dihydroorotate from bicarbonate: step 1/3. Large subunit of the glutamine-dependent carbamoyl phosphate synthetase (CPSase). CPSase catalyzes the formation of carbamoyl phosphate from the ammonia moiety of glutamine, carbonate, and phosphate donated by ATP, constituting the first step of 2 biosynthetic pathways, one leading to arginine and/or urea and the other to pyrimidine nucleotides. The large subunit (synthetase) binds the substrates ammonia (free or transferred from glutamine from the small subunit), hydrogencarbonate and ATP and carries out an ATP-coupled ligase reaction, activating hydrogencarbonate by forming carboxy phosphate which reacts with ammonia to form carbamoyl phosphate. The chain is Carbamoyl phosphate synthase large chain from Oenococcus oeni (strain ATCC BAA-331 / PSU-1).